Here is a 515-residue protein sequence, read N- to C-terminus: Thioredoxin domain-containing protein 2 (515 aa).

A disordered region spans residues 1 to 23; it reads MTLNNGGKANERGSNENPLQALS. Phosphoserine occurs at positions 14 and 39. Positions 51–390 are disordered; that stretch reads TLHMSTEESE…NTIKSSEEDV (340 aa). Composition is skewed to polar residues over residues 61–75 and 85–136; these read FPQQ…SENT and KPSS…TNST. 21 tandem repeats follow at residues 92 to 106, 107 to 121, 122 to 136, 137 to 151, 152 to 166, 167 to 181, 182 to 196, 197 to 211, 212 to 226, 227 to 241, 242 to 256, 257 to 271, 272 to 286, 287 to 301, 302 to 316, 317 to 331, 332 to 346, 347 to 362, 363 to 375, 376 to 390, and 391 to 405. The tract at residues 92–405 is 21 X 15 AA approximate tandem repeat of Q-P-K-X-G-D-I-P-K-S-[PS]-E-[KE]-X-I; it reads QLKQENISKS…KLLGLGAEIE (314 aa). Composition is skewed to basic and acidic residues over residues 137–293 and 302–358; these read HYRE…ETKV and QSKE…KSPE. Ser-146 is modified (phosphoserine). Polar residues predominate over residues 375-384; it reads IQSQEGNTIK. Residues 398–515 enclose the Thioredoxin domain; it reads LGLGAEIETL…KLERSISELK (118 aa). Cys-442 and Cys-445 form a disulfide bridge.

As to expression, testis-specific. Strongly expressed in the testicular seminiferous tubules, mostly in the round spermatids.

It localises to the cytoplasm. Probably plays a regulatory role in sperm development. May participate in regulation of fibrous sheath (FS) assembly by supporting the formation of disulfide bonds during sperm tail morphogenesis. May also be required to rectify incorrect disulfide pairing and generate suitable pairs between the FS constituents. Can reduce disulfide bonds in vitro in the presence of NADP and thioredoxin reductase. The chain is Thioredoxin domain-containing protein 2 (Txndc2) from Mus musculus (Mouse).